A 58-amino-acid polypeptide reads, in one-letter code: Photosystem II reaction center protein K (58 aa).

Positions 1 to 21 (MLVISNVYPSNLFTLINPFFA) are excised as a propeptide. A helical transmembrane segment spans residues 29–49 (IFDPIVDVMPIIPVFFFLLAF).

This sequence belongs to the PsbK family. PSII is composed of 1 copy each of membrane proteins PsbA, PsbB, PsbC, PsbD, PsbE, PsbF, PsbH, PsbI, PsbJ, PsbK, PsbL, PsbM, PsbT, PsbX, PsbY, PsbZ, Psb30/Ycf12, at least 3 peripheral proteins of the oxygen-evolving complex and a large number of cofactors. It forms dimeric complexes.

The protein resides in the plastid. The protein localises to the chloroplast thylakoid membrane. Its function is as follows. One of the components of the core complex of photosystem II (PSII). PSII is a light-driven water:plastoquinone oxidoreductase that uses light energy to abstract electrons from H(2)O, generating O(2) and a proton gradient subsequently used for ATP formation. It consists of a core antenna complex that captures photons, and an electron transfer chain that converts photonic excitation into a charge separation. The polypeptide is Photosystem II reaction center protein K (Psilotum nudum (Whisk fern)).